The primary structure comprises 145 residues: Hemoglobin subunit beta (145 aa).

The 145-residue stretch at 1–145 (MLTAEEKAAV…VANALAHRYH (145 aa)) folds into the Globin domain. A Phosphothreonine modification is found at T11. A Phosphoserine modification is found at S43. The residue at position 58 (K58) is an N6-acetyllysine. A heme b-binding site is contributed by H62. K81 carries the post-translational modification N6-acetyllysine. H91 is a binding site for heme b. C92 carries the post-translational modification S-nitrosocysteine.

It belongs to the globin family. As to quaternary structure, heterotetramer of two alpha chains and two beta chains. In terms of tissue distribution, red blood cells.

In terms of biological role, involved in oxygen transport from the lung to the various peripheral tissues. In Tragelaphus strepsiceros (Greater kudu), this protein is Hemoglobin subunit beta (HBB).